The following is a 149-amino-acid chain: MLEKLKKLLSKKGDNFSTPAPVSVDDYLEEIEEIPLTPVEEEKVIIKVCSIEDEKDAVNAIVMAEAGYIVIAKTPNLEKEIDDEFIEIIRKMRNEVAKFGGMLLALGDEHLLITPRNVVIEKLIKEKKEESNVTKENIEIKEEKEENSE.

Basic and acidic residues predominate over residues 130–144 (ESNVTKENIEIKEEK). The segment at 130–149 (ESNVTKENIEIKEEKEENSE) is disordered.

This is an uncharacterized protein from Methanocaldococcus jannaschii (strain ATCC 43067 / DSM 2661 / JAL-1 / JCM 10045 / NBRC 100440) (Methanococcus jannaschii).